A 224-amino-acid chain; its full sequence is Abasic site processing protein YoqW (224 aa).

Catalysis depends on cysteine 2, which acts as the Nucleophile. Thiazolidine linkage to a ring-opened DNA abasic site is present on cysteine 2. Glutamate 106 is a catalytic residue.

Belongs to the SOS response-associated peptidase family.

Its activity is regulated as follows. Formation and reversal of DNA-protein cross-link depends on DNA context. Catalyzes formation of the thiazolidine linkage in presence of abasic sites in single-stranded DNA. Mediates the reversal of the thiazolidine cross-link in presence of double stranded DNA. In terms of biological role, sensor of abasic sites in single-stranded DNA (ssDNA) required to preserve genome integrity by promoting error-free repair of abasic sites. Recognizes and binds abasic sites in ssDNA at replication forks and chemically modifies the lesion by forming a covalent cross-link with DNA: forms a stable thiazolidine linkage between a ring-opened abasic site and the alpha-amino and sulfhydryl substituents of its N-terminal catalytic cysteine residue. The DNA-protein cross-link is then reversed: able to catalyze the reversal of the thiazolidine cross-link and cycle between a cross-link and a non-cross-linked state depending on DNA context: mediates self-reversal of the thiazolidine cross-link in double stranded DNA. May act as a protease: mediates autocatalytic processing of its N-terminal methionine in order to expose the catalytic cysteine. In Bacillus subtilis (strain 168), this protein is Abasic site processing protein YoqW (yoqW).